A 447-amino-acid polypeptide reads, in one-letter code: N-succinylarginine dihydrolase (447 aa).

Residues 19–28, asparagine 110, and 137–138 contribute to the substrate site; these read AGLSFGNEAS and HR. Glutamate 174 is an active-site residue. Arginine 212 provides a ligand contact to substrate. Histidine 248 is a catalytic residue. Residues aspartate 250 and asparagine 359 each coordinate substrate. The active-site Nucleophile is the cysteine 365.

This sequence belongs to the succinylarginine dihydrolase family. Homodimer.

It catalyses the reaction N(2)-succinyl-L-arginine + 2 H2O + 2 H(+) = N(2)-succinyl-L-ornithine + 2 NH4(+) + CO2. The protein operates within amino-acid degradation; L-arginine degradation via AST pathway; L-glutamate and succinate from L-arginine: step 2/5. In terms of biological role, catalyzes the hydrolysis of N(2)-succinylarginine into N(2)-succinylornithine, ammonia and CO(2). The polypeptide is N-succinylarginine dihydrolase (Salmonella paratyphi B (strain ATCC BAA-1250 / SPB7)).